The sequence spans 97 residues: uncharacterized protein (97 aa).

Disordered stretches follow at residues 1–20 (MTEGADMARTSRPPVTIASD) and 52–97 (VPAA…GRRA).

This is an uncharacterized protein from Paracoccus pantotrophus (Thiosphaera pantotropha).